The sequence spans 354 residues: Guanine nucleotide-binding protein G(t) subunit alpha-2 (354 aa).

The segment at 1–27 is disordered; sequence MGSGASAEDKELAKRSKELEKKLQEDA. G2 is lipidated: N-myristoyl glycine. Basic and acidic residues predominate over residues 7–27; sequence AEDKELAKRSKELEKKLQEDA. A G-alpha domain is found at 32 to 354; it reads KTVKLLLLGA…KENLKDCGLF (323 aa). The G1 motif stretch occupies residues 35 to 48; sequence KLLLLGAGESGKST. GTP-binding positions include 40 to 47, 175 to 181, 200 to 204, 269 to 272, and A326; these read GAGESGKS, LRSRVKT, DVGGQ, and NKKD. S47 is a binding site for Mg(2+). Residues 173–181 are G2 motif; that stretch reads DVLRSRVKT. R178 bears the ADP-ribosylarginine; by cholera toxin mark. Residue T181 participates in Mg(2+) binding. A G3 motif region spans residues 196–205; sequence FRMFDVGGQR. Residues 265-272 are G4 motif; it reads VLFLNKKD. The segment at 324–329 is G5 motif; sequence TCATDT. C351 is subject to ADP-ribosylcysteine; by pertussis toxin.

Belongs to the G-alpha family. G(i/o/t/z) subfamily. As to quaternary structure, g proteins are composed of 3 units; alpha, beta and gamma. The alpha chain contains the guanine nucleotide binding site. Retinal rod outer segment.

The protein localises to the cell projection. The protein resides in the cilium. Its subcellular location is the photoreceptor outer segment. It is found in the photoreceptor inner segment. Its function is as follows. Guanine nucleotide-binding proteins (G proteins) are involved as modulators or transducers in various transmembrane signaling systems. Transducin is an amplifier and one of the transducers of a visual impulse that performs the coupling between rhodopsin and cGMP-phosphodiesterase. This Homo sapiens (Human) protein is Guanine nucleotide-binding protein G(t) subunit alpha-2 (GNAT2).